The sequence spans 431 residues: Glutamyl-tRNA(Gln) amidotransferase subunit A (431 aa).

Active-site charge relay system residues include Lys-55 and Ser-130. The Acyl-ester intermediate role is filled by Ser-154.

This sequence belongs to the amidase family. GatA subfamily. In terms of assembly, heterotrimer of A, B and C subunits.

The enzyme catalyses L-glutamyl-tRNA(Gln) + L-glutamine + ATP + H2O = L-glutaminyl-tRNA(Gln) + L-glutamate + ADP + phosphate + H(+). Its function is as follows. Allows the formation of correctly charged Gln-tRNA(Gln) through the transamidation of misacylated Glu-tRNA(Gln) in organisms which lack glutaminyl-tRNA synthetase. The reaction takes place in the presence of glutamine and ATP through an activated gamma-phospho-Glu-tRNA(Gln). The protein is Glutamyl-tRNA(Gln) amidotransferase subunit A of Methanococcus maripaludis (strain C5 / ATCC BAA-1333).